Here is a 125-residue protein sequence, read N- to C-terminus: L-fucose mutarotase (125 aa).

His-13 serves as the catalytic Proton donor.

Belongs to the RbsD / FucU family. FucU mutarotase subfamily.

It carries out the reaction alpha-L-fucose = beta-L-fucose. Active toward L-galactopyranoside and D-arabinopyranoside but no D-fucopyranoside activity detected. In terms of biological role, plays a role in the catabolism of L-fucose. Involved in the anomeric conversion of L-fucose. The chain is L-fucose mutarotase from Xanthomonas campestris pv. campestris (strain ATCC 33913 / DSM 3586 / NCPPB 528 / LMG 568 / P 25).